We begin with the raw amino-acid sequence, 542 residues long: 4-coumarate--CoA ligase-like 1 (542 aa).

ATP is bound by residues S189, S190, G191, T192, T193, and K197. Residue Y237 coordinates (E)-4-coumaroyl-AMP. R258 provides a ligand contact to CoA. Residues 260–331 form an SBD1 region; the sequence is DLRIFLNALI…AKFPNVQVQE (72 aa). The (E)-4-coumaroyl-AMP site is built by A309, E331, A332, and T336. Positions 331, 332, 336, 420, and 435 each coordinate ATP. The tract at residues 332-399 is SBD2; sequence AYGLTEHSCI…VRSQCVMQGY (68 aa). (E)-4-coumaroyl-AMP contacts are provided by K437 and K441. K443 and G444 together coordinate CoA. K526 serves as a coordination point for ATP.

This sequence belongs to the ATP-dependent AMP-binding enzyme family. In terms of assembly, interacts with TKPR1, PKSA and PKSB. Mg(2+) serves as cofactor. In terms of tissue distribution, mostly confined to anther tapetal cells.

The protein localises to the endoplasmic reticulum. It catalyses the reaction (E)-4-coumarate + ATP + CoA = (E)-4-coumaroyl-CoA + AMP + diphosphate. The enzyme catalyses (E)-4-coumarate + ATP + H(+) = (E)-4-coumaroyl-AMP + diphosphate. The catalysed reaction is (E)-4-coumaroyl-AMP + CoA = (E)-4-coumaroyl-CoA + AMP + H(+). Functionally, carboxylate--CoA ligase that may use 4-coumarate as substrate. Follows a two-step reaction mechanism, wherein the carboxylate substrate first undergoes adenylation by ATP, followed by a thioesterification in the presence of CoA to yield the final CoA thioester. This is 4-coumarate--CoA ligase-like 1 from Arabidopsis thaliana (Mouse-ear cress).